The sequence spans 502 residues: Na(+)/H(+) antiporter NhaB (502 aa).

Helical transmembrane passes span 27-49 (AFLV…VLIL), 66-86 (PGGL…ESVF), 95-115 (VILL…LLLY), 128-148 (IVLS…LDAL), 149-169 (TVTA…HQFA), 241-261 (FFLQ…VTCI), 299-318 (IAAL…SLAL), 350-370 (FEEA…VAVI), 394-414 (MFFI…VATV), 450-470 (ATPN…APLI), and 477-497 (MVLM…IAVY).

Belongs to the NhaB Na(+)/H(+) (TC 2.A.34) antiporter family.

It localises to the cell inner membrane. It carries out the reaction 2 Na(+)(in) + 3 H(+)(out) = 2 Na(+)(out) + 3 H(+)(in). In terms of biological role, na(+)/H(+) antiporter that extrudes sodium in exchange for external protons. The chain is Na(+)/H(+) antiporter NhaB from Teredinibacter turnerae (strain ATCC 39867 / T7901).